We begin with the raw amino-acid sequence, 1404 residues long: DNA-directed RNA polymerase subunit beta' (1404 aa).

The Zn(2+) site is built by Cys-60, Cys-62, Cys-75, and Cys-78. Mg(2+) is bound by residues Asp-449, Asp-451, and Asp-453. Residues Cys-778, Cys-852, Cys-859, and Cys-862 each contribute to the Zn(2+) site. The tract at residues 1381–1404 (DRPLEEEEEEEIPQSIADDSDGDE) is disordered. Acidic residues predominate over residues 1384 to 1404 (LEEEEEEEIPQSIADDSDGDE).

It belongs to the RNA polymerase beta' chain family. The RNAP catalytic core consists of 2 alpha, 1 beta, 1 beta' and 1 omega subunit. When a sigma factor is associated with the core the holoenzyme is formed, which can initiate transcription. Mg(2+) is required as a cofactor. It depends on Zn(2+) as a cofactor.

The enzyme catalyses RNA(n) + a ribonucleoside 5'-triphosphate = RNA(n+1) + diphosphate. DNA-dependent RNA polymerase catalyzes the transcription of DNA into RNA using the four ribonucleoside triphosphates as substrates. This Leptospira borgpetersenii serovar Hardjo-bovis (strain L550) protein is DNA-directed RNA polymerase subunit beta'.